Reading from the N-terminus, the 117-residue chain is Multidrug resistance protein EbrB (117 aa).

4 helical membrane-spanning segments follow: residues 3–23, 31–51, 59–79, and 81–101; these read GLLY…MLKL, WPIG…SFSL, AYAT…FLLF, and ETIS…VVVL.

It belongs to the drug/metabolite transporter (DMT) superfamily. Small multidrug resistance (SMR) (TC 2.A.7.1) family. EbrA/EbrB subfamily. As to quaternary structure, the efflux pump is composed of EbrA and EbrB.

It is found in the cell membrane. Functionally, part of a multidrug efflux pump. Confers resistance to cationic lipophilic dyes such as ethidium bromide, acriflavine, pyronine Y and safranin O. The efflux is probably coupled to an influx of protons. The protein is Multidrug resistance protein EbrB (ebrB) of Bacillus atrophaeus.